Here is a 174-residue protein sequence, read N- to C-terminus: UPF0316 protein lmo1776 (174 aa).

3 consecutive transmembrane segments (helical) span residues 4–24 (GIFI…IYTV), 36–56 (LAAL…SLVL), and 62–82 (IANV…GMKI).

The protein belongs to the UPF0316 family.

Its subcellular location is the cell membrane. The polypeptide is UPF0316 protein lmo1776 (Listeria monocytogenes serovar 1/2a (strain ATCC BAA-679 / EGD-e)).